We begin with the raw amino-acid sequence, 365 residues long: Anhydro-N-acetylmuramic acid kinase (365 aa).

12-19 (GTSMDGMD) is a binding site for ATP.

This sequence belongs to the anhydro-N-acetylmuramic acid kinase family.

It catalyses the reaction 1,6-anhydro-N-acetyl-beta-muramate + ATP + H2O = N-acetyl-D-muramate 6-phosphate + ADP + H(+). It functions in the pathway amino-sugar metabolism; 1,6-anhydro-N-acetylmuramate degradation. It participates in cell wall biogenesis; peptidoglycan recycling. Functionally, catalyzes the specific phosphorylation of 1,6-anhydro-N-acetylmuramic acid (anhMurNAc) with the simultaneous cleavage of the 1,6-anhydro ring, generating MurNAc-6-P. Is required for the utilization of anhMurNAc either imported from the medium or derived from its own cell wall murein, and thus plays a role in cell wall recycling. The sequence is that of Anhydro-N-acetylmuramic acid kinase from Pseudomonas paraeruginosa (strain DSM 24068 / PA7) (Pseudomonas aeruginosa (strain PA7)).